Consider the following 155-residue polypeptide: MFFIVAAGFVIAALIAAIGMAINRFFVRRRQARAGQTKPATTRPMAEARARPGATAVPRRSPTSPQSAYVPATVYTSPIGSPRRGSVRYTHVMAHPNTTTTVSENLPEEVPPPYSPAATASNTPQNEASPAATEAVNHERPASPPPVYRPPEEMV.

The signal sequence occupies residues 1-21; it reads MFFIVAAGFVIAALIAAIGMA. The tract at residues 35–155 is disordered; it reads GQTKPATTRP…PVYRPPEEMV (121 aa). The segment covering 118-128 has biased composition (polar residues); sequence ATASNTPQNEA.

This is an uncharacterized protein from Schizosaccharomyces pombe (strain 972 / ATCC 24843) (Fission yeast).